Reading from the N-terminus, the 110-residue chain is Large ribosomal subunit protein uL22 (110 aa).

Belongs to the universal ribosomal protein uL22 family. As to quaternary structure, part of the 50S ribosomal subunit.

This protein binds specifically to 23S rRNA; its binding is stimulated by other ribosomal proteins, e.g. L4, L17, and L20. It is important during the early stages of 50S assembly. It makes multiple contacts with different domains of the 23S rRNA in the assembled 50S subunit and ribosome. In terms of biological role, the globular domain of the protein is located near the polypeptide exit tunnel on the outside of the subunit, while an extended beta-hairpin is found that lines the wall of the exit tunnel in the center of the 70S ribosome. The chain is Large ribosomal subunit protein uL22 from Photorhabdus laumondii subsp. laumondii (strain DSM 15139 / CIP 105565 / TT01) (Photorhabdus luminescens subsp. laumondii).